Here is a 157-residue protein sequence, read N- to C-terminus: MGSNYLKLTFDKLDVGEINELVAHESCGAVALFVGTTRDNFDGKEVVLLQYEAYEAMALKSMNHICEELRGRWTDLVHIGIHHRLGTVPVKEASVVIAISSPHREAALEAVRWAIDELKKSVPVWKKEQYAEGQGCSEWKENKECTWSKAYKDNHIL.

Residues 103 to 104 (HR), lysine 119, and 126 to 128 (KKE) contribute to the substrate site.

It belongs to the MoaE family. MOCS2B subfamily. As to quaternary structure, heterotetramer; composed of 2 small (MOCS2A) and 2 large (MOCS2B) subunits.

The protein resides in the cytoplasm. It carries out the reaction 2 [molybdopterin-synthase sulfur-carrier protein]-C-terminal-Gly-aminoethanethioate + cyclic pyranopterin phosphate + H2O = molybdopterin + 2 [molybdopterin-synthase sulfur-carrier protein]-C-terminal Gly-Gly + 2 H(+). It functions in the pathway cofactor biosynthesis; molybdopterin biosynthesis. Catalytic subunit of the molybdopterin synthase complex, a complex that catalyzes the conversion of precursor Z into molybdopterin. Acts by mediating the incorporation of 2 sulfur atoms from thiocarboxylated MOCS2A into precursor Z to generate a dithiolene group. This is Molybdopterin synthase catalytic subunit from Culex quinquefasciatus (Southern house mosquito).